A 332-amino-acid polypeptide reads, in one-letter code: Fructose-1,6-bisphosphatase class 1 (332 aa).

Residues glutamate 89, aspartate 110, leucine 112, and aspartate 113 each coordinate Mg(2+). Substrate contacts are provided by residues 113-116 (DGSS), asparagine 206, tyrosine 239, 257-259 (YLY), and lysine 269. Glutamate 275 contacts Mg(2+).

Belongs to the FBPase class 1 family. As to quaternary structure, homotetramer. Mg(2+) is required as a cofactor.

Its subcellular location is the cytoplasm. It carries out the reaction beta-D-fructose 1,6-bisphosphate + H2O = beta-D-fructose 6-phosphate + phosphate. Its pathway is carbohydrate biosynthesis; gluconeogenesis. This is Fructose-1,6-bisphosphatase class 1 from Salmonella typhimurium (strain LT2 / SGSC1412 / ATCC 700720).